The chain runs to 316 residues: Peroxisomal targeting signal 2 receptor (316 aa).

6 WD repeats span residues 56–96 (DTRD…GGRP), 102–142 (EHTK…SLKT), 145–185 (EHRY…SLNT), 188–228 (AHDH…RPTT), 232–272 (GHTY…DPII), and 277–316 (HHTEFVVGLDWNMFIDGQMASCSWDEQVCVWNLGRPGQFR).

The protein belongs to the WD repeat peroxin-7 family. As to quaternary structure, interacts with PEX5; interaction only takes place when PEX7 is associated with cargo proteins.

Its subcellular location is the cytoplasm. The protein localises to the cytosol. It localises to the peroxisome matrix. Its function is as follows. Receptor required for the peroxisomal import of proteins containing a C-terminal PTS2-type peroxisomal targeting signal. Specifically binds to cargo proteins containing a PTS2 peroxisomal targeting signal in the cytosol. Cargo protein-binding triggers interaction with PEX5 and formation of a ternary complex composed of PEX5 and PEX7 along with PTS2-containing cargo proteins, which is tranlocated into peroxisomes by passing through the PEX13-PEX14 docking complex. This is Peroxisomal targeting signal 2 receptor (pex7) from Dictyostelium discoideum (Social amoeba).